The sequence spans 162 residues: UPF0254 protein MTH1148 homolog (162 aa).

This sequence belongs to the UPF0254 family.

This chain is UPF0254 protein MTH1148 homolog, found in Methanothermobacter thermautotrophicus (strain Winter) (Methanobacterium thermoautotrophicum).